A 340-amino-acid polypeptide reads, in one-letter code: 3-hydroxybenzoate synthase (340 aa).

The substrate site is built by tyrosine 147, arginine 154, tyrosine 207, and arginine 220. Glutamate 334 functions as the Proton acceptor in the catalytic mechanism.

The protein belongs to the FkbO/Hyg5 family. In terms of assembly, trimer.

The enzyme catalyses chorismate = 3-hydroxybenzoate + pyruvate. Involved in the biosynthesis of BC325, a rapamycin analog containing a 3-hydroxybenzoate starter unit. Catalyzes the hydrolysis of chorismate via an intramolecular mechanism to yield 3-hydroxybenzoate (3HBA). The chain is 3-hydroxybenzoate synthase from Streptomyces hygroscopicus.